The sequence spans 452 residues: Probable phosphoglucosamine mutase (452 aa).

Residue Ser-101 is the Phosphoserine intermediate of the active site. Positions 101, 242, 244, and 246 each coordinate Mg(2+). The residue at position 101 (Ser-101) is a Phosphoserine.

It belongs to the phosphohexose mutase family. It depends on Mg(2+) as a cofactor. Activated by phosphorylation.

The catalysed reaction is alpha-D-glucosamine 1-phosphate = D-glucosamine 6-phosphate. Functionally, catalyzes the conversion of glucosamine-6-phosphate to glucosamine-1-phosphate. In Methanosphaera stadtmanae (strain ATCC 43021 / DSM 3091 / JCM 11832 / MCB-3), this protein is Probable phosphoglucosamine mutase.